Reading from the N-terminus, the 362-residue chain is tRNA-specific 2-thiouridylase MnmA (362 aa).

ATP is bound by residues 9-16 and M35; that span reads GMSGGVDS. The interaction with target base in tRNA stretch occupies residues 95 to 97; that stretch reads NPD. C100 functions as the Nucleophile in the catalytic mechanism. A disulfide bridge connects residues C100 and C197. G124 contributes to the ATP binding site. The tract at residues 147-149 is interaction with tRNA; that stretch reads KDQ. The active-site Cysteine persulfide intermediate is C197. The tract at residues 309–310 is interaction with tRNA; sequence RY.

Belongs to the MnmA/TRMU family.

The protein resides in the cytoplasm. It catalyses the reaction S-sulfanyl-L-cysteinyl-[protein] + uridine(34) in tRNA + AH2 + ATP = 2-thiouridine(34) in tRNA + L-cysteinyl-[protein] + A + AMP + diphosphate + H(+). In terms of biological role, catalyzes the 2-thiolation of uridine at the wobble position (U34) of tRNA, leading to the formation of s(2)U34. In Cupriavidus pinatubonensis (strain JMP 134 / LMG 1197) (Cupriavidus necator (strain JMP 134)), this protein is tRNA-specific 2-thiouridylase MnmA.